The sequence spans 208 residues: Ribosomal RNA large subunit methyltransferase E (208 aa).

S-adenosyl-L-methionine contacts are provided by Gly63, Trp65, Asp83, Asp99, and Asp124. The Proton acceptor role is filled by Lys164.

This sequence belongs to the class I-like SAM-binding methyltransferase superfamily. RNA methyltransferase RlmE family.

The protein localises to the cytoplasm. It catalyses the reaction uridine(2552) in 23S rRNA + S-adenosyl-L-methionine = 2'-O-methyluridine(2552) in 23S rRNA + S-adenosyl-L-homocysteine + H(+). In terms of biological role, specifically methylates the uridine in position 2552 of 23S rRNA at the 2'-O position of the ribose in the fully assembled 50S ribosomal subunit. The protein is Ribosomal RNA large subunit methyltransferase E of Salmonella typhi.